A 432-amino-acid chain; its full sequence is MAAAKKRTQSDIEDVRDRKAKVIKDSGEKRHIAALILARGGSKGIPLKNIKVLAGVPLIGWVLRAAVDSKQFDSVWVSTDHDDIEKVAKTWGAQVHRRSPEVSKDSSSSLDTIQEFARLNPEVDVICHIQATSPCLHPFHLKEALEMITKQGFTSVFSVVRRHHFRWQEVKKGGSVATQPLNLDPCNRPRRQDWDGELCENGSFYIYTRATIERGLQGGKWAYYEMLPEYSVDIDVDIDWPVAEQRVLRFGYFGLDKPEVVRLLLCNVSGCLTDGRVLISVSGEEMVSVNTRDTMGIRMLQREGVEVILISSSEDLLTKALADNLSQRTGCEVRQLGKDIQGEVIAMMDDKDLDWKEVAYMGNDAPDVDCLNLAGLSAVPRDAPVVAINAAKYSCHSAAGLGAVREFSEHILLLKKKAKSQMEQDRIHRNTF.

Residues arginine 39, asparagine 49, arginine 98, serine 107, serine 109, and glutamine 130 each coordinate substrate. Arginine 188 is a catalytic residue.

Belongs to the CMP-NeuNAc synthase family. As to quaternary structure, homotetramer; the active enzyme is formed by a dimer of dimers. As to expression, expressed in testis, ovary and liver.

It localises to the nucleus. It catalyses the reaction an N-acylneuraminate + CTP = a CMP-N-acyl-beta-neuraminate + diphosphate. The protein operates within amino-sugar metabolism; N-acetylneuraminate metabolism. Catalyzes the activation of N-acetylneuraminic acid (NeuNAc) to cytidine 5'-monophosphate N-acetylneuraminic acid (CMP-NeuNAc), a substrate required for the addition of sialic acid. The chain is N-acylneuraminate cytidylyltransferase (cmas) from Oncorhynchus mykiss (Rainbow trout).